The following is a 245-amino-acid chain: Adenosylcobinamide-GDP ribazoletransferase (245 aa).

A run of 5 helical transmembrane segments spans residues 31–51 (FGRA…VLYA), 61–81 (PLLQ…ALHL), 113–133 (VAVV…AALL), 138–158 (AGLL…LFLT), and 192–212 (LAFG…FAWL).

The protein belongs to the CobS family. Mg(2+) serves as cofactor.

It is found in the cell inner membrane. It carries out the reaction alpha-ribazole + adenosylcob(III)inamide-GDP = adenosylcob(III)alamin + GMP + H(+). The enzyme catalyses alpha-ribazole 5'-phosphate + adenosylcob(III)inamide-GDP = adenosylcob(III)alamin 5'-phosphate + GMP + H(+). It functions in the pathway cofactor biosynthesis; adenosylcobalamin biosynthesis; adenosylcobalamin from cob(II)yrinate a,c-diamide: step 7/7. Functionally, joins adenosylcobinamide-GDP and alpha-ribazole to generate adenosylcobalamin (Ado-cobalamin). Also synthesizes adenosylcobalamin 5'-phosphate from adenosylcobinamide-GDP and alpha-ribazole 5'-phosphate. This is Adenosylcobinamide-GDP ribazoletransferase from Pseudomonas aeruginosa (strain UCBPP-PA14).